Reading from the N-terminus, the 364-residue chain is Protein spindle-F (364 aa).

The interval 1–26 (MEASAAKITPMASSMSASGSTNSPSS) is disordered. A compositionally biased stretch (low complexity) spans 9-26 (TPMASSMSASGSTNSPSS). The stretch at 32–114 (ALQVALQTIK…GMVSNENRRL (83 aa)) forms a coiled coil. Serine 53 is subject to Phosphoserine. The disordered stretch occupies residues 56 to 75 (EENQQLREASSRSEGAPRAN). Serine 85, serine 172, and serine 202 each carry phosphoserine. Residues 210-243 (AKRCLDGLQELRREAMKQQQELRSVMTLLENRIA) are a coiled coil. Residues serine 264 and serine 270 each carry the phosphoserine modification. The UBZ1-type zinc-finger motif lies at 310 to 336 (EKTCPMCGKQYSSQVSFNAFREHVEMH). Zn(2+) contacts are provided by cysteine 313 and cysteine 316. Serine 325 carries the phosphoserine modification. Positions 332 and 336 each coordinate Zn(2+). Serine 349 is subject to Phosphoserine.

In terms of assembly, forms homooligomers. Interacts with the dynein light chain ctp. Interacts (via C-terminus) with IKKepsilon; this leads to phosphorylation of spn-F. Forms ternary complexes with ctp and IKKepsilon; this is required for spn-F redistribution from puncta in larval neurons and for dendrite pruning. Interacts with ctp and IKKepsilon through distinct regions. Interacts (via C-terminus) with jvl. Phosphorylated by IKKepsilon. Phosphorylation is required for spn-F neuronal distribution and dendrite pruning and reduces spn-F homooligomerization. It does not lead to spn-F degradation. In pupal bristles, localizes to the bristle tip throughout the elongation period (at protein level).

Its subcellular location is the cytoplasm. It is found in the cytoskeleton. It localises to the cell projection. The protein resides in the axon. The protein localises to the dendrite. Its subcellular location is the perikaryon. Its function is as follows. Plays a role in oocyte axis determination and microtubule organization during oogenesis. Also required for polarized organization of the bristle. Required, with jvl, for activation of the kinase IKKepsilon in the germ line. Also required for localization of IKKepsilon to the distal tip of elongating bristles by acting as an adapter linking IKKepsilon and cytoplasmic dynein. Involved in dendrite pruning in larval sensory neurons during metamorphosis. In Drosophila melanogaster (Fruit fly), this protein is Protein spindle-F.